The sequence spans 295 residues: Ethanolamine ammonia-lyase small subunit (295 aa).

3 residues coordinate adenosylcob(III)alamin: valine 207, glutamate 228, and cysteine 258.

This sequence belongs to the EutC family. The basic unit is a heterodimer which dimerizes to form tetramers. The heterotetramers trimerize; 6 large subunits form a core ring with 6 small subunits projecting outwards. The cofactor is adenosylcob(III)alamin.

Its subcellular location is the bacterial microcompartment. It catalyses the reaction ethanolamine = acetaldehyde + NH4(+). The protein operates within amine and polyamine degradation; ethanolamine degradation. Catalyzes the deamination of various vicinal amino-alcohols to oxo compounds. Allows this organism to utilize ethanolamine as the sole source of nitrogen and carbon in the presence of external vitamin B12. This chain is Ethanolamine ammonia-lyase small subunit, found in Escherichia coli O7:K1 (strain IAI39 / ExPEC).